Consider the following 338-residue polypeptide: Mitochondrial transcription factor 1 (338 aa).

Residues L23, D76, D100, and N136 each coordinate S-adenosyl-L-methionine.

Belongs to the class I-like SAM-binding methyltransferase superfamily. rRNA adenine N(6)-methyltransferase family.

The protein localises to the mitochondrion. In terms of biological role, mitochondrial transcription factor that confers selective promoter recognition on the core subunit of the yeast mitochondrial RNA polymerase. Interacts with DNA in a non-specific manner. The chain is Mitochondrial transcription factor 1 (MTF1) from Lachancea kluyveri (Yeast).